A 217-amino-acid polypeptide reads, in one-letter code: 2-phospho-L-lactate guanylyltransferase (217 aa).

This sequence belongs to the CofC family. As to quaternary structure, homodimer.

It catalyses the reaction (2S)-2-phospholactate + GTP + H(+) = (2S)-lactyl-2-diphospho-5'-guanosine + diphosphate. Its pathway is cofactor biosynthesis; coenzyme F420 biosynthesis. Its function is as follows. Guanylyltransferase that catalyzes the activation of (2S)-2-phospholactate (2-PL) as (2S)-lactyl-2-diphospho-5'-guanosine, via the condensation of 2-PL with GTP. It is involved in the biosynthesis of coenzyme F420, a hydride carrier cofactor. In Methanospirillum hungatei JF-1 (strain ATCC 27890 / DSM 864 / NBRC 100397 / JF-1), this protein is 2-phospho-L-lactate guanylyltransferase.